Here is a 138-residue protein sequence, read N- to C-terminus: Acidic phospholipase A2 Tpu-E6a (138 aa).

An N-terminal signal peptide occupies residues M1–G16. 7 cysteine pairs are disulfide-bonded: C42/C131, C44/C60, C59/C111, C65/C138, C66/C104, C73/C97, and C91/C102. Ca(2+) contacts are provided by Y43, G45, and G47. The active site involves H63. Ca(2+) is bound at residue D64. Residue D105 is part of the active site.

In terms of assembly, monomer. It depends on Ca(2+) as a cofactor. In terms of tissue distribution, expressed by the venom gland.

The protein resides in the secreted. The enzyme catalyses a 1,2-diacyl-sn-glycero-3-phosphocholine + H2O = a 1-acyl-sn-glycero-3-phosphocholine + a fatty acid + H(+). Snake venom phospholipase A2 (PLA2) that impairs hemostasis. It weakly inhibits ADP-induced platelet aggregation when tested on platelet rich plasma from human and rabbit blood (15-25% of inhibition at 5-10 ug of enzyme), and dose-dependently inhibits blood coagulation, possibly by inhibiting thrombin activation. Exhibits high hydrolytic activities toward L-dipalmitoyl phosphatidylcholine. PLA2 catalyzes the calcium-dependent hydrolysis of the 2-acyl groups in 3-sn-phosphoglycerides. The chain is Acidic phospholipase A2 Tpu-E6a from Craspedocephalus puniceus (Flat-nosed pitviper).